Reading from the N-terminus, the 647-residue chain is DNA mismatch repair protein MutL (647 aa).

Disordered stretches follow at residues 356–391 (EGSQ…SSIS) and 407–428 (PRPQ…EALP). Polar residues predominate over residues 413 to 423 (LRPQYQGSVTS).

This sequence belongs to the DNA mismatch repair MutL/HexB family.

This protein is involved in the repair of mismatches in DNA. It is required for dam-dependent methyl-directed DNA mismatch repair. May act as a 'molecular matchmaker', a protein that promotes the formation of a stable complex between two or more DNA-binding proteins in an ATP-dependent manner without itself being part of a final effector complex. This Citrifermentans bemidjiense (strain ATCC BAA-1014 / DSM 16622 / JCM 12645 / Bem) (Geobacter bemidjiensis) protein is DNA mismatch repair protein MutL.